An 89-amino-acid polypeptide reads, in one-letter code: Probable Fe(2+)-trafficking protein (89 aa).

The protein belongs to the Fe(2+)-trafficking protein family.

Functionally, could be a mediator in iron transactions between iron acquisition and iron-requiring processes, such as synthesis and/or repair of Fe-S clusters in biosynthetic enzymes. The polypeptide is Probable Fe(2+)-trafficking protein (Stenotrophomonas maltophilia (strain K279a)).